Consider the following 408-residue polypeptide: Putative mannan endo-1,4-beta-mannosidase P (408 aa).

The N-terminal stretch at 1-23 (MKCLCFIVLLAIVIAQSYVGVEA) is a signal peptide. The N-linked (GlcNAc...) asparagine glycan is linked to N73. Positions 85 and 201 each coordinate substrate. E202 serves as the catalytic Proton donor. The active-site Nucleophile is the E322. W364 provides a ligand contact to substrate.

The protein belongs to the glycosyl hydrolase 5 (cellulase A) family.

The protein localises to the secreted. It carries out the reaction Random hydrolysis of (1-&gt;4)-beta-D-mannosidic linkages in mannans, galactomannans and glucomannans.. The polypeptide is Putative mannan endo-1,4-beta-mannosidase P (MANP) (Arabidopsis thaliana (Mouse-ear cress)).